A 757-amino-acid chain; its full sequence is Voltage-gated potassium channel KCNC3 (757 aa).

Residues M1–G78 form an important for normal N-type inactivation region. Residues M1–S87 form a disordered region. Over M1–R290 the chain is Cytoplasmic. Positions P21–Q40 are enriched in pro residues. The segment covering Q41 to P52 has biased composition (low complexity). Zn(2+) is bound by residues H157, C163, C184, and C185. Low complexity predominate over residues A210–A219. Residues A210–G232 are disordered. The chain crosses the membrane as a helical span at residues Y291 to L309. 2 N-linked (GlcNAc...) asparagine glycosylation sites follow: N320 and N336. Residues V351–C370 traverse the membrane as a helical segment. The Cytoplasmic portion of the chain corresponds to P371 to S379. The chain crosses the membrane as a helical span at residues S380–L398. The chain crosses the membrane as a helical; Voltage-sensor span at residues F412–L434. The Cytoplasmic segment spans residues R435–E447. Residues F448 to A469 form a helical membrane-spanning segment. N-linked (GlcNAc...) asparagine glycosylation is present at N483. Positions 503, 504, 505, and 506 each coordinate K(+). A Selectivity filter motif is present at residues T503–D508. A helical transmembrane segment spans residues L518–V539. At N540–P757 the chain is on the cytoplasmic side. Positions P556–Y613 are disordered. R625 carries the omega-N-methylarginine modification. Residues Q682–D746 form a disordered region. 2 positions are modified to phosphoserine: S686 and S691. Pro residues predominate over residues P728 to F743.

It belongs to the potassium channel family. C (Shaw) (TC 1.A.1.2) subfamily. Kv3.3/KCNC3 sub-subfamily. As to quaternary structure, homotetramer. Heterotetramer with KCNC1. Interacts (via C-terminus) with HAX1; this interaction modulates channel gating. Identified in a complex with ACTR3, a subunit of the Arp2/3 complex; this interaction is indirect and depends on the presence of HAX1. N-glycosylated.

It is found in the cell membrane. The protein resides in the presynaptic cell membrane. It localises to the perikaryon. The protein localises to the cell projection. Its subcellular location is the axon. It is found in the dendrite. The protein resides in the dendritic spine membrane. It localises to the cytoplasm. The protein localises to the cell cortex. Its subcellular location is the cytoskeleton. It carries out the reaction K(+)(in) = K(+)(out). Functionally, voltage-gated potassium channel that plays an important role in the rapid repolarization of fast-firing brain neurons. The channel opens in response to the voltage difference across the membrane, forming a potassium-selective channel through which potassium ions pass in accordance with their electrochemical gradient. The channel displays rapid activation and inactivation kinetics. It plays a role in the regulation of the frequency, shape and duration of action potentials in Purkinje cells. Required for normal survival of cerebellar neurons, probably via its role in regulating the duration and frequency of action potentials that in turn regulate the activity of voltage-gated Ca(2+) channels and cellular Ca(2+) homeostasis. Required for normal motor function. Plays a role in the reorganization of the cortical actin cytoskeleton and the formation of actin veil structures in neuronal growth cones via its interaction with HAX1 and the Arp2/3 complex. This is Voltage-gated potassium channel KCNC3 (KCNC3) from Homo sapiens (Human).